The primary structure comprises 435 residues: F-box/FBD/LRR-repeat protein At1g51370 (435 aa).

The 47-residue stretch at 18–64 (EDRISQLPEPLISEILFHLSTKDSVRTSALSTKWRYLWQSVPGLDLD) folds into the F-box domain. 5 LRR repeats span residues 123–148 (VHCF…RLRW), 170–195 (VSYP…ILFS), 234–259 (AKMY…DFVN), 262–287 (GRYQ…VISS), and 314–340 (RFYI…ILEM). Residues 354-406 (EPNVMVSTVPWCLVSSLKFVELKRSIPRYEGEMELVRYVLTNSTVLKKLRLNV) form the FBD domain.

The protein is F-box/FBD/LRR-repeat protein At1g51370 of Arabidopsis thaliana (Mouse-ear cress).